A 482-amino-acid polypeptide reads, in one-letter code: Ribosomal RNA small subunit methyltransferase F (482 aa).

S-adenosyl-L-methionine-binding positions include 119 to 125 (ASAPGSK), Glu-143, Asp-170, and Asp-188. The active-site Nucleophile is Cys-241.

This sequence belongs to the class I-like SAM-binding methyltransferase superfamily. RsmB/NOP family.

Its subcellular location is the cytoplasm. It catalyses the reaction cytidine(1407) in 16S rRNA + S-adenosyl-L-methionine = 5-methylcytidine(1407) in 16S rRNA + S-adenosyl-L-homocysteine + H(+). In terms of biological role, specifically methylates the cytosine at position 1407 (m5C1407) of 16S rRNA. The sequence is that of Ribosomal RNA small subunit methyltransferase F from Shewanella sp. (strain ANA-3).